The following is a 1431-amino-acid chain: Probable serine/threonine-protein kinase irlA (1431 aa).

The segment covering 1–10 (MTKPIFKSKT) has biased composition (basic residues). Disordered stretches follow at residues 1–81 (MTKP…EKEE) and 736–879 (KREK…NNNK). A compositionally biased stretch (acidic residues) spans 25-43 (NEDEEEEEGGEEGGEEEEI). A compositionally biased stretch (low complexity) spans 46–67 (NKNSNNSSSNSNNNNNDNNNNN). 2 coiled-coil regions span residues 57 to 97 (NNNN…LDME) and 715 to 759 (KKRS…NNNN). Basic and acidic residues predominate over residues 68–81 (GEERKVEKEEEKEE). Residues 738 to 749 (EKKKQKDKKKNK) are compositionally biased toward basic residues. The segment covering 750–776 (SNQNQKNNNNQNNQSNNNKINSPSSNK) has biased composition (low complexity). Residues 777–791 (LTQNVTPPSSPVNII) are compositionally biased toward polar residues. A compositionally biased stretch (low complexity) spans 792–812 (TSSSTTSSSTSSTTSSTTSST). The span at 821–838 (TLPIKTSSPTKPESQKPS) shows a compositional bias: polar residues. Low complexity predominate over residues 854–878 (NNNNNNNNNNNNNNNNNNNNNNNNN). Positions 860 to 971 (NNNNNNNNNN…QESIQLNQTL (112 aa)) form a coiled coil. Residues 987-1261 (RDENNIIGRG…IDTILNHPLF (275 aa)) form the Protein kinase domain. ATP-binding positions include 993 to 1001 (IGRGSNGTL) and Lys-1016. The active-site Proton acceptor is the Asp-1130. The KEN domain maps to 1264–1431 (TNEKIKFYES…NSKDYLNIKF (168 aa)).

The protein belongs to the protein kinase superfamily. Ser/Thr protein kinase family.

It catalyses the reaction L-seryl-[protein] + ATP = O-phospho-L-seryl-[protein] + ADP + H(+). The catalysed reaction is L-threonyl-[protein] + ATP = O-phospho-L-threonyl-[protein] + ADP + H(+). The chain is Probable serine/threonine-protein kinase irlA (irlA) from Dictyostelium discoideum (Social amoeba).